The chain runs to 405 residues: Imidazolonepropionase (405 aa).

Fe(3+) contacts are provided by H73 and H75. H73 and H75 together coordinate Zn(2+). 4-imidazolone-5-propanoate is bound by residues R82, Y145, and H178. N-formimidoyl-L-glutamate is bound at residue Y145. Residue H243 coordinates Fe(3+). H243 provides a ligand contact to Zn(2+). Q246 serves as a coordination point for 4-imidazolone-5-propanoate. Residue D318 participates in Fe(3+) binding. D318 serves as a coordination point for Zn(2+). N320 and G322 together coordinate N-formimidoyl-L-glutamate. Residue T323 coordinates 4-imidazolone-5-propanoate.

This sequence belongs to the metallo-dependent hydrolases superfamily. HutI family. Requires Zn(2+) as cofactor. The cofactor is Fe(3+).

The protein resides in the cytoplasm. It catalyses the reaction 4-imidazolone-5-propanoate + H2O = N-formimidoyl-L-glutamate. The protein operates within amino-acid degradation; L-histidine degradation into L-glutamate; N-formimidoyl-L-glutamate from L-histidine: step 3/3. Functionally, catalyzes the hydrolytic cleavage of the carbon-nitrogen bond in imidazolone-5-propanoate to yield N-formimidoyl-L-glutamate. It is the third step in the universal histidine degradation pathway. The chain is Imidazolonepropionase from Brucella abortus (strain S19).